A 62-amino-acid chain; its full sequence is Photosystem II reaction center protein Z (62 aa).

2 consecutive transmembrane segments (helical) span residues 8 to 28 and 41 to 61; these read AVFA…VVFA and FSGT…NSLI.

The protein belongs to the PsbZ family. In terms of assembly, PSII is composed of 1 copy each of membrane proteins PsbA, PsbB, PsbC, PsbD, PsbE, PsbF, PsbH, PsbI, PsbJ, PsbK, PsbL, PsbM, PsbT, PsbY, PsbZ, Psb30/Ycf12, at least 3 peripheral proteins of the oxygen-evolving complex and a large number of cofactors. It forms dimeric complexes.

Its subcellular location is the plastid. The protein localises to the chloroplast thylakoid membrane. Functionally, may control the interaction of photosystem II (PSII) cores with the light-harvesting antenna, regulates electron flow through the 2 photosystem reaction centers. PSII is a light-driven water plastoquinone oxidoreductase, using light energy to abstract electrons from H(2)O, generating a proton gradient subsequently used for ATP formation. This chain is Photosystem II reaction center protein Z, found in Vitis vinifera (Grape).